We begin with the raw amino-acid sequence, 780 residues long: Calpain clp-1 (780 aa).

Basic and acidic residues predominate over residues 269-282 (DVDPFVRPGPDPDR). Residues 269–300 (DVDPFVRPGPDPDRGGGGSGPSPISPRPTTEP) form a disordered region. Positions 316 to 611 (LFEDPQFLAN…FEKMEICNLG (296 aa)) constitute a Calpain catalytic domain. Active-site residues include C371, H527, and N551.

The protein belongs to the peptidase C2 family. In terms of tissue distribution, expressed in muscle and neuronal tissues. Expressed in the ventral and dorsal nerve cord, intestinal and hypodermal tissues.

Its subcellular location is the cytoplasm. It is found in the myofibril. It localises to the sarcomere. The protein resides in the m line. Calcium-regulated non-lysosomal thiol-protease which catalyzes limited proteolysis of substrates. Required for assembly and maintenance of integrin attachment complexes which are essential for maintenance of adult muscle. Proteolytic activity is activated in response to increased intracellular Ca(2+) levels during cell degeneration and promotes necrotic cell death. This Caenorhabditis elegans protein is Calpain clp-1.